The sequence spans 776 residues: Endonuclease MutS2 (776 aa).

Residue 330–337 (GPNTGGKT) participates in ATP binding. In terms of domain architecture, Smr spans 701-776 (LDLRGMRYEE…GSGATIAILK (76 aa)).

The protein belongs to the DNA mismatch repair MutS family. MutS2 subfamily. In terms of assembly, homodimer. Binds to stalled ribosomes, contacting rRNA.

In terms of biological role, endonuclease that is involved in the suppression of homologous recombination and thus may have a key role in the control of bacterial genetic diversity. Its function is as follows. Acts as a ribosome collision sensor, splitting the ribosome into its 2 subunits. Detects stalled/collided 70S ribosomes which it binds and splits by an ATP-hydrolysis driven conformational change. Acts upstream of the ribosome quality control system (RQC), a ribosome-associated complex that mediates the extraction of incompletely synthesized nascent chains from stalled ribosomes and their subsequent degradation. Probably generates substrates for RQC. This Lactococcus lactis subsp. cremoris (strain MG1363) protein is Endonuclease MutS2.